The chain runs to 435 residues: Protoheme IX farnesyltransferase, mitochondrial (435 aa).

Residues 1 to 35 constitute a mitochondrion transit peptide; sequence MPALCATYLIHSGNLRACLRIVPLTKPSVVIAYRH. 6 consecutive transmembrane segments (helical) span residues 135–155, 157–177, 212–232, 250–270, 324–344, and 401–421; these read VLVM…ATVL, LLSL…INMG, GVIG…LLGA, IINT…GWAA, VALR…YYGI, and FWVS…HKKG.

This sequence belongs to the UbiA prenyltransferase family.

It is found in the mitochondrion membrane. In terms of biological role, converts protoheme IX and farnesyl diphosphate to heme O. This chain is Protoheme IX farnesyltransferase, mitochondrial (COX10), found in Eremothecium gossypii (strain ATCC 10895 / CBS 109.51 / FGSC 9923 / NRRL Y-1056) (Yeast).